The sequence spans 662 residues: Zinc finger protein 800 (662 aa).

A C2H2-type 1; degenerate zinc finger spans residues 69-91 (FECKLCRSLFRGLPNLITHKKFY). K132 participates in a covalent cross-link: Glycyl lysine isopeptide (Lys-Gly) (interchain with G-Cter in SUMO2). Disordered regions lie at residues 172–197 (ETSSEQLKAVPDADTEVEEAIEPPSI) and 205–224 (AAPTEEQPQESQADLETSDS). A compositionally biased stretch (low complexity) spans 205–216 (AAPTEEQPQESQ). The C2H2-type 2 zinc finger occupies 231-254 (LICCLCRKEFNSRRGVRRHIRKVH). K280 is covalently cross-linked (Glycyl lysine isopeptide (Lys-Gly) (interchain with G-Cter in SUMO2)). The C2H2-type 3 zinc-finger motif lies at 288-311 (RSCPVCCKSFATKANVRRHFDEVH). S318 carries the phosphoserine modification. The interval 319-349 (ITPDIATKPGQPLFLDSASPKKSFKTRKQKS) is disordered. T320 carries the phosphothreonine modification. S337 is subject to Phosphoserine. Residues 340–349 (KSFKTRKQKS) are compositionally biased toward basic residues. A C2H2-type 4 zinc finger spans residues 357 to 382 (TACKCLLCKRKYSSQIMLKRHMQIVH). The tract at residues 389 to 473 (ANSKREKGPN…AGGQQKTRKP (85 aa)) is disordered. Residue K392 forms a Glycyl lysine isopeptide (Lys-Gly) (interchain with G-Cter in SUMO2) linkage. The segment covering 414–434 (VESSPPSITHSPQNELKGTNH) has biased composition (polar residues). Phosphoserine is present on residues S420, S424, S453, S455, S458, and S460. Low complexity predominate over residues 456–468 (PKSASPSAAGGQQ). K474 participates in a covalent cross-link: Glycyl lysine isopeptide (Lys-Gly) (interchain with G-Cter in SUMO2). 2 C2H2-type zinc fingers span residues 484–506 (LYCKLCKRQFTSKQNLTKHIELH) and 517–540 (YKCPLCTYETRRKRDVIRHITVVH). 2 disordered regions span residues 573–597 (RGPSREEAKHNDSKQDGTSNSPSKK) and 633–662 (HHKKTHKANATNSPEGNKTKGRSTRSKALV). A compositionally biased stretch (basic and acidic residues) spans 575–587 (PSREEAKHNDSKQ). Residue K597 forms a Glycyl lysine isopeptide (Lys-Gly) (interchain with G-Cter in SUMO2) linkage. The C2H2-type 7 zinc-finger motif lies at 616 to 638 (HRCNKCGKAFAKKTYLEHHKKTH). The span at 651–662 (TKGRSTRSKALV) shows a compositional bias: basic residues.

The protein belongs to the krueppel C2H2-type zinc-finger protein family.

The protein localises to the nucleus. Functionally, may be involved in transcriptional regulation. This is Zinc finger protein 800 (Znf800) from Mus musculus (Mouse).